The following is a 228-amino-acid chain: UPF0056 membrane protein MJ0972 (228 aa).

5 helical membrane passes run 22–42 (FYIYGFVSLFITIDPIGLIPI), 68–88 (VVLLLFALFGNYIFGYFGITI), 133–153 (VPLAIPLISGPGAITTTMILI), 163–183 (GVVVLSILSAMLVSGIILSLT), and 201–221 (IMGLLLVAISVQIIFTGIVGL).

The protein belongs to the UPF0056 (MarC) family.

It localises to the cell membrane. In Methanocaldococcus jannaschii (strain ATCC 43067 / DSM 2661 / JAL-1 / JCM 10045 / NBRC 100440) (Methanococcus jannaschii), this protein is UPF0056 membrane protein MJ0972.